Here is a 286-residue protein sequence, read N- to C-terminus: Quinone oxidoreductase 2 (286 aa).

NADP(+)-binding positions include 6–11, Arg33, 73–75, 138–143, and Arg171; these read GATGQL, SSS, and GWYSEN.

Belongs to the NmrA-type oxidoreductase family. As to quaternary structure, monomer.

The catalysed reaction is a quinone + NADH + H(+) = a quinol + NAD(+). It catalyses the reaction a quinone + NADPH + H(+) = a quinol + NADP(+). Quinone oxidoreductase that may play some additional role beyond quinone reduction. Potential redox sensor protein. Overexpression induces retardation of growth. The polypeptide is Quinone oxidoreductase 2 (qorB) (Escherichia coli (strain K12)).